The primary structure comprises 164 residues: Large ribosomal subunit protein bL9 (164 aa).

It belongs to the bacterial ribosomal protein bL9 family.

Functionally, binds to the 23S rRNA. The protein is Large ribosomal subunit protein bL9 of Borrelia hermsii (strain HS1 / DAH).